Here is a 362-residue protein sequence, read N- to C-terminus: Anthranilate phosphoribosyltransferase (362 aa).

5-phospho-alpha-D-ribose 1-diphosphate is bound by residues Gly96, 99 to 100 (GD), Thr104, 106 to 109 (NIST), 124 to 132 (KHGNRAASS), and Gly136. Residue Gly96 participates in anthranilate binding. Ser108 provides a ligand contact to Mg(2+). Asn127 is a binding site for anthranilate. An anthranilate-binding site is contributed by Arg182. Mg(2+) is bound by residues Asp240 and Glu241.

This sequence belongs to the anthranilate phosphoribosyltransferase family. As to quaternary structure, homodimer. Mg(2+) serves as cofactor.

The catalysed reaction is N-(5-phospho-beta-D-ribosyl)anthranilate + diphosphate = 5-phospho-alpha-D-ribose 1-diphosphate + anthranilate. It participates in amino-acid biosynthesis; L-tryptophan biosynthesis; L-tryptophan from chorismate: step 2/5. Its function is as follows. Catalyzes the transfer of the phosphoribosyl group of 5-phosphorylribose-1-pyrophosphate (PRPP) to anthranilate to yield N-(5'-phosphoribosyl)-anthranilate (PRA). This is Anthranilate phosphoribosyltransferase from Rhodococcus jostii (strain RHA1).